A 158-amino-acid polypeptide reads, in one-letter code: NAD(P)H-quinone oxidoreductase subunit N (158 aa).

Belongs to the complex I NdhN subunit family. In terms of assembly, NDH-1 can be composed of about 15 different subunits; different subcomplexes with different compositions have been identified which probably have different functions.

It localises to the cellular thylakoid membrane. It carries out the reaction a plastoquinone + NADH + (n+1) H(+)(in) = a plastoquinol + NAD(+) + n H(+)(out). The catalysed reaction is a plastoquinone + NADPH + (n+1) H(+)(in) = a plastoquinol + NADP(+) + n H(+)(out). Functionally, NDH-1 shuttles electrons from an unknown electron donor, via FMN and iron-sulfur (Fe-S) centers, to quinones in the respiratory and/or the photosynthetic chain. The immediate electron acceptor for the enzyme in this species is believed to be plastoquinone. Couples the redox reaction to proton translocation, and thus conserves the redox energy in a proton gradient. Cyanobacterial NDH-1 also plays a role in inorganic carbon-concentration. This is NAD(P)H-quinone oxidoreductase subunit N from Synechococcus elongatus (strain ATCC 33912 / PCC 7942 / FACHB-805) (Anacystis nidulans R2).